The following is a 366-amino-acid chain: Chorismate synthase (366 aa).

Arg48 lines the NADP(+) pocket. Residues 125-127, 241-242, Gly285, 300-304, and Arg326 each bind FMN; these read RSS, NA, and KPTSS.

This sequence belongs to the chorismate synthase family. As to quaternary structure, homotetramer. The cofactor is FMNH2.

It carries out the reaction 5-O-(1-carboxyvinyl)-3-phosphoshikimate = chorismate + phosphate. It participates in metabolic intermediate biosynthesis; chorismate biosynthesis; chorismate from D-erythrose 4-phosphate and phosphoenolpyruvate: step 7/7. In terms of biological role, catalyzes the anti-1,4-elimination of the C-3 phosphate and the C-6 proR hydrogen from 5-enolpyruvylshikimate-3-phosphate (EPSP) to yield chorismate, which is the branch point compound that serves as the starting substrate for the three terminal pathways of aromatic amino acid biosynthesis. This reaction introduces a second double bond into the aromatic ring system. The sequence is that of Chorismate synthase from Roseobacter denitrificans (strain ATCC 33942 / OCh 114) (Erythrobacter sp. (strain OCh 114)).